A 490-amino-acid polypeptide reads, in one-letter code: MVPVIALVGRPNVGKSTMFNRLTRTRDAIVGDLSGLTRDRQYGEAKWQGRSYILIDTGGISGDEHGMDEKMAEQSLLAIEEADVVLFLVDARAGYTAADQMIGEHLRKRNKRSYVVANKIDNIDENLARAEFSPMGLGDAIPVAGAHGRGISQMLEIALREFPRDEDEPEEGVEVEEVAEGQEAKRIPGPSEKDGIKIAIIGRPNVGKSTLVNRMLGEDRVIVYDEPGTTRDSIYIPFERNEEKYTLIDTAGVRKRGKIHEEVEKFSVVKTLQAIKDANVVIFVMDAREGVVDHDLNLLGFALEAGRALVIALNKWDGMTPGERDFVKIELERRLFFVDFADIHFISAMHGTGVGNLYQSVQNSFKSAVTRWPTSRLTQILEDAVSEHAPPMVGSRRIKLRYAHLGGANPPLIVIHGNQVEKVPKSYVRYLENTYRRVLKLVGTPIRIEFKGGENPYEGNKNTLTDRQVNKKRRMMSHHKKADKKRRDKR.

EngA-type G domains are found at residues 3-166 (PVIA…PRDE) and 196-369 (IKIA…KSAV). GTP contacts are provided by residues 9–16 (GRPNVGKS), 56–60 (DTGGI), 118–121 (NKID), 202–209 (GRPNVGKS), 249–253 (DTAGV), and 314–317 (NKWD). The KH-like domain occupies 370–454 (TRWPTSRLTQ…PIRIEFKGGE (85 aa)). Residues 452–490 (GGENPYEGNKNTLTDRQVNKKRRMMSHHKKADKKRRDKR) form a disordered region. Over residues 470 to 490 (NKKRRMMSHHKKADKKRRDKR) the composition is skewed to basic residues.

The protein belongs to the TRAFAC class TrmE-Era-EngA-EngB-Septin-like GTPase superfamily. EngA (Der) GTPase family. In terms of assembly, associates with the 50S ribosomal subunit.

Functionally, GTPase that plays an essential role in the late steps of ribosome biogenesis. The polypeptide is GTPase Der (Pseudomonas syringae pv. syringae (strain B728a)).